The following is a 396-amino-acid chain: Tryptophan synthase beta chain (396 aa).

Lysine 86 carries the N6-(pyridoxal phosphate)lysine modification.

Belongs to the TrpB family. Tetramer of two alpha and two beta chains. Pyridoxal 5'-phosphate is required as a cofactor.

It carries out the reaction (1S,2R)-1-C-(indol-3-yl)glycerol 3-phosphate + L-serine = D-glyceraldehyde 3-phosphate + L-tryptophan + H2O. Its pathway is amino-acid biosynthesis; L-tryptophan biosynthesis; L-tryptophan from chorismate: step 5/5. Functionally, the beta subunit is responsible for the synthesis of L-tryptophan from indole and L-serine. The chain is Tryptophan synthase beta chain from Photobacterium profundum (strain SS9).